The following is a 450-amino-acid chain: MQVQQPQQIQQQHLQQQQAQQHQQQQVQQHQQQQQQQQQQQQIYQQIVNQPVNNVHQLPSLQQQQLLEQYDELLKQVSLIRSNVSDFFNSFIEDAKQQQTIVNKEEMKQKLKKSMDLVLGSISSIDKVSKRISSYSFQIASSNFSTQEASWAYSTGIYDNRNIKVQLEIRNENYWRSQTSYKSSLASSNLENKLKDLFPIIFQEDEESSSLSKKRKQISSLTSNSLSTTTITTTTTPSPLFKLPSTPPTLLLSGTISPFYDYFAQIERVIHSIRQESALEIFEIQKQSSGAPKGLFVECPDVFKCLICFGIPNDRKDCFTIDRISFFGVKENFDSLWASSKYNIFKKISENSFEAISYYSANPNGGSILKCILSWIWSFRGLFLEECKGCQDILHLDSPQYMYLPPSFRTFDNYTPYHPSCYQNHLLSCNSFSSSTSSSIQQSPFSPLNK.

Positions 15 to 118 (QQQQAQQHQQ…QKLKKSMDLV (104 aa)) form a coiled coil.

It belongs to the Mediator complex subunit 27 family. In terms of assembly, component of the Mediator complex.

Its subcellular location is the nucleus. Its function is as follows. Component of the Mediator complex, a coactivator involved in the regulated transcription of nearly all RNA polymerase II-dependent genes. Mediator functions as a bridge to convey information from gene-specific regulatory proteins to the basal RNA polymerase II transcription machinery. Mediator is recruited to promoters by direct interactions with regulatory proteins and serves as a scaffold for the assembly of a functional preinitiation complex with RNA polymerase II and the general transcription factors. In Dictyostelium discoideum (Social amoeba), this protein is Putative mediator of RNA polymerase II transcription subunit 27 (med27).